The chain runs to 85 residues: UPF0386 protein RHE_CH01859 (85 aa).

This sequence belongs to the UPF0386 family.

In Rhizobium etli (strain ATCC 51251 / DSM 11541 / JCM 21823 / NBRC 15573 / CFN 42), this protein is UPF0386 protein RHE_CH01859.